The chain runs to 340 residues: Biotin synthase (340 aa).

The region spanning 47 to 269 (SELQLSQLLS…VAVARIVCPK (223 aa)) is the Radical SAM core domain. Residues Cys62, Cys66, and Cys69 each contribute to the [4Fe-4S] cluster site. [2Fe-2S] cluster contacts are provided by Cys106, Cys137, Cys197, and Arg273.

The protein belongs to the radical SAM superfamily. Biotin synthase family. In terms of assembly, homodimer. [4Fe-4S] cluster serves as cofactor. [2Fe-2S] cluster is required as a cofactor.

It catalyses the reaction (4R,5S)-dethiobiotin + (sulfur carrier)-SH + 2 reduced [2Fe-2S]-[ferredoxin] + 2 S-adenosyl-L-methionine = (sulfur carrier)-H + biotin + 2 5'-deoxyadenosine + 2 L-methionine + 2 oxidized [2Fe-2S]-[ferredoxin]. It participates in cofactor biosynthesis; biotin biosynthesis; biotin from 7,8-diaminononanoate: step 2/2. Functionally, catalyzes the conversion of dethiobiotin (DTB) to biotin by the insertion of a sulfur atom into dethiobiotin via a radical-based mechanism. The polypeptide is Biotin synthase (Caulobacter sp. (strain K31)).